Here is a 255-residue protein sequence, read N- to C-terminus: Pimeloyl-[acyl-carrier protein] methyl ester esterase (255 aa).

An AB hydrolase-1 domain is found at leucine 16 to glutamate 241. Substrate is bound by residues tryptophan 22, serine 82–leucine 83, and phenylalanine 143–glutamine 147. The Nucleophile role is filled by serine 82. Active-site residues include aspartate 207 and histidine 235. Position 235 (histidine 235) interacts with substrate.

It belongs to the AB hydrolase superfamily. Carboxylesterase BioH family. As to quaternary structure, monomer.

It is found in the cytoplasm. It carries out the reaction 6-carboxyhexanoyl-[ACP] methyl ester + H2O = 6-carboxyhexanoyl-[ACP] + methanol + H(+). It participates in cofactor biosynthesis; biotin biosynthesis. The physiological role of BioH is to remove the methyl group introduced by BioC when the pimeloyl moiety is complete. It allows to synthesize pimeloyl-ACP via the fatty acid synthetic pathway through the hydrolysis of the ester bonds of pimeloyl-ACP esters. The protein is Pimeloyl-[acyl-carrier protein] methyl ester esterase of Vibrio parahaemolyticus serotype O3:K6 (strain RIMD 2210633).